Here is a 530-residue protein sequence, read N- to C-terminus: Autoinducer-2 kinase (530 aa).

Belongs to the FGGY kinase family.

It is found in the cytoplasm. It carries out the reaction (S)-4,5-dihydroxypentane-2,3-dione + ATP = (2S)-2-hydroxy-3,4-dioxopentyl phosphate + ADP + H(+). In terms of biological role, catalyzes the phosphorylation of autoinducer-2 (AI-2) to phospho-AI-2, which subsequently inactivates the transcriptional regulator LsrR and leads to the transcription of the lsr operon. Phosphorylates the ring-open form of (S)-4,5-dihydroxypentane-2,3-dione (DPD), which is the precursor to all AI-2 signaling molecules, at the C5 position. The protein is Autoinducer-2 kinase of Yersinia pseudotuberculosis serotype O:3 (strain YPIII).